A 185-amino-acid chain; its full sequence is Ribosome-recycling factor (185 aa).

Belongs to the RRF family.

The protein localises to the cytoplasm. Its function is as follows. Responsible for the release of ribosomes from messenger RNA at the termination of protein biosynthesis. May increase the efficiency of translation by recycling ribosomes from one round of translation to another. In Chloroflexus aurantiacus (strain ATCC 29364 / DSM 637 / Y-400-fl), this protein is Ribosome-recycling factor.